A 409-amino-acid polypeptide reads, in one-letter code: Probable aspartate/prephenate aminotransferase (409 aa).

Residues G39, W125, and N175 each coordinate L-aspartate. The residue at position 239 (K239) is an N6-(pyridoxal phosphate)lysine. Residue R375 coordinates L-aspartate.

This sequence belongs to the class-I pyridoxal-phosphate-dependent aminotransferase family. Homodimer. Pyridoxal 5'-phosphate serves as cofactor.

Its subcellular location is the cytoplasm. It catalyses the reaction L-aspartate + 2-oxoglutarate = oxaloacetate + L-glutamate. It carries out the reaction L-arogenate + 2-oxoglutarate = prephenate + L-glutamate. Functionally, catalyzes the reversible conversion of aspartate and 2-oxoglutarate to glutamate and oxaloacetate. Can also transaminate prephenate in the presence of glutamate. In Rickettsia felis (strain ATCC VR-1525 / URRWXCal2) (Rickettsia azadi), this protein is Probable aspartate/prephenate aminotransferase (aatA).